The primary structure comprises 235 residues: Probable ribosomal RNA small subunit methyltransferase A (235 aa).

Histidine 9, leucine 11, glycine 34, glutamate 55, aspartate 78, and asparagine 93 together coordinate S-adenosyl-L-methionine.

It belongs to the class I-like SAM-binding methyltransferase superfamily. rRNA adenine N(6)-methyltransferase family. RsmA subfamily.

It is found in the cytoplasm. Functionally, specifically dimethylates two adjacent adenosines in the loop of a conserved hairpin near the 3'-end of 16S rRNA in the 30S particle. May play a critical role in biogenesis of 30S subunits. The sequence is that of Probable ribosomal RNA small subunit methyltransferase A from Pyrobaculum islandicum (strain DSM 4184 / JCM 9189 / GEO3).